A 195-amino-acid polypeptide reads, in one-letter code: Protease (195 aa).

The Peptidase A2 domain occupies 71 to 149; sequence ALMLVDTGAE…DKWQILGRDV (79 aa). Residue Asp76 is part of the active site.

The sequence is that of Protease from Bos taurus (Bovine).